A 221-amino-acid chain; its full sequence is Translation initiation factor 6 (221 aa).

The protein belongs to the eIF-6 family.

Its function is as follows. Binds to the 50S ribosomal subunit and prevents its association with the 30S ribosomal subunit to form the 70S initiation complex. The sequence is that of Translation initiation factor 6 from Methanospirillum hungatei JF-1 (strain ATCC 27890 / DSM 864 / NBRC 100397 / JF-1).